Reading from the N-terminus, the 413-residue chain is Chloramphenicol efflux pump MT0201 (413 aa).

12 consecutive transmembrane segments (helical) span residues leucine 23–alanine 43, valine 55–proline 75, leucine 89–phenylalanine 109, alanine 110–isoleucine 130, isoleucine 150–leucine 170, leucine 176–leucine 196, valine 226–isoleucine 246, asparagine 256–alanine 276, alanine 286–phenylalanine 306, alanine 312–valine 332, glycine 353–leucine 373, and leucine 378–valine 398.

This sequence belongs to the major facilitator superfamily.

Its subcellular location is the cell membrane. Active efflux pump that plays an important role in chloramphenicol resistance. This is Chloramphenicol efflux pump MT0201 from Mycobacterium tuberculosis (strain CDC 1551 / Oshkosh).